The chain runs to 81 residues: Photosystem I iron-sulfur center (81 aa).

2 consecutive 4Fe-4S ferredoxin-type domains span residues 2–31 (AHSVKIYDTCIGCTQCVRACPTDVLEMIPW) and 39–68 (IASAPRTEDCAGCKRCESACPTDFLSVRVY). Positions 11, 14, 17, 21, 48, 51, 54, and 58 each coordinate [4Fe-4S] cluster.

The eukaryotic PSI reaction center is composed of at least 11 subunits. It depends on [4Fe-4S] cluster as a cofactor.

It localises to the plastid. Its subcellular location is the chloroplast thylakoid membrane. The catalysed reaction is reduced [plastocyanin] + hnu + oxidized [2Fe-2S]-[ferredoxin] = oxidized [plastocyanin] + reduced [2Fe-2S]-[ferredoxin]. Its function is as follows. Apoprotein for the two 4Fe-4S centers FA and FB of photosystem I (PSI); essential for photochemical activity. FB is the terminal electron acceptor of PSI, donating electrons to ferredoxin. The C-terminus interacts with PsaA/B/D and helps assemble the protein into the PSI complex. Required for binding of PsaD and PsaE to PSI. PSI is a plastocyanin-ferredoxin oxidoreductase, converting photonic excitation into a charge separation, which transfers an electron from the donor P700 chlorophyll pair to the spectroscopically characterized acceptors A0, A1, FX, FA and FB in turn. This is Photosystem I iron-sulfur center from Pinus thunbergii (Japanese black pine).